A 411-amino-acid polypeptide reads, in one-letter code: MPLFSLVLLILGLHCAPPNSCEGKITSCLSPQQNATLYKMSSINADFAFNLYRRFTVEIPDQNIFFSPVSIPAGLAMLSLGACSSTQTQILEGLGFNLTDTPVAEIQQGFQHLICSLNFPKKELELQMGNALFIGKQLKPLEKFLDDVKNLYETEVFSTDFSNVSAAQQEINSHVEKQTKGKIVGLIQDLKPNTITVLVNYLCFKAQWANPFDPSKTEEGSSFLVDKTTTVQVPMMHQMEQYYHLVDTELNCTVLQMDYSKNALALFVLPKEGQMEWVEGAMSSKTLKKWNRLLRKGWVDLFVPKFSISATYDLGDILLKMGIQDAFADNADFSGLTKDNGLKVSNVAHKAMFYIGEKGTEAVPEVRFLNQPETTLLHPIIQFDRSFLLLILEKNTRSILFLGKVVDPTEA.

An N-terminal signal peptide occupies residues 1–15; that stretch reads MPLFSLVLLILGLHC. N-linked (GlcNAc...) asparagine glycans are attached at residues Asn34, Asn97, Asn163, and Asn251. Positions 291 and 394 each coordinate thyroxine.

Belongs to the serpin family. In terms of tissue distribution, expressed by the liver and secreted in plasma.

The protein resides in the secreted. Major thyroid hormone transport protein in serum. This chain is Thyroxine-binding globulin (SERPINA7), found in Bos taurus (Bovine).